The chain runs to 239 residues: Small ribosomal subunit protein uS3c (239 aa).

A KH type-2 domain is found at 43 to 139 (IKNYIQKNRK…RLNISIEKVK (97 aa)). The disordered stretch occupies residues 50-80 (NRKKGSNRKIESDSSSEVITHNRKTDSGSSS).

Belongs to the universal ribosomal protein uS3 family. As to quaternary structure, part of the 30S ribosomal subunit.

It localises to the plastid. Its subcellular location is the chloroplast. The protein is Small ribosomal subunit protein uS3c (rps3) of Agrostis stolonifera (Creeping bentgrass).